A 950-amino-acid polypeptide reads, in one-letter code: Glycine dehydrogenase (decarboxylating) 1 (950 aa).

Lys-704 bears the N6-(pyridoxal phosphate)lysine mark.

This sequence belongs to the GcvP family. As to quaternary structure, the glycine cleavage system is composed of four proteins: P, T, L and H. Pyridoxal 5'-phosphate serves as cofactor.

The enzyme catalyses N(6)-[(R)-lipoyl]-L-lysyl-[glycine-cleavage complex H protein] + glycine + H(+) = N(6)-[(R)-S(8)-aminomethyldihydrolipoyl]-L-lysyl-[glycine-cleavage complex H protein] + CO2. Functionally, the glycine cleavage system catalyzes the degradation of glycine. The P protein binds the alpha-amino group of glycine through its pyridoxal phosphate cofactor; CO(2) is released and the remaining methylamine moiety is then transferred to the lipoamide cofactor of the H protein. This chain is Glycine dehydrogenase (decarboxylating) 1, found in Pseudomonas fluorescens (strain Pf0-1).